Here is a 477-residue protein sequence, read N- to C-terminus: Cysteine--tRNA ligase (477 aa).

Zn(2+) is bound at residue cysteine 28. The 'HIGH' region motif lies at 30-40; sequence PTVYDYAHIGN. Zn(2+) contacts are provided by cysteine 213, histidine 238, and glutamate 242. The short motif at 270–274 is the 'KMSKS' region element; sequence KMSKS. Residue lysine 273 coordinates ATP.

Belongs to the class-I aminoacyl-tRNA synthetase family. Monomer. Zn(2+) serves as cofactor.

It is found in the cytoplasm. It catalyses the reaction tRNA(Cys) + L-cysteine + ATP = L-cysteinyl-tRNA(Cys) + AMP + diphosphate. The polypeptide is Cysteine--tRNA ligase (Chlamydia trachomatis serovar A (strain ATCC VR-571B / DSM 19440 / HAR-13)).